Here is a 349-residue protein sequence, read N- to C-terminus: Meiotic recombination protein DMC1 homolog (349 aa).

138 to 145 (GEFRSGKT) is a binding site for ATP. Position 240 (Arg240) interacts with dsDNA. Arg240, Phe243, Arg246, Arg252, and Arg320 together coordinate ssDNA. 2 residues coordinate dsDNA: Arg246 and Arg252.

It belongs to the RecA family. DMC1 subfamily. As to quaternary structure, double stacked ring-shaped homooctamer.

Its subcellular location is the nucleus. Functionally, may participate in meiotic recombination. This is Meiotic recombination protein DMC1 homolog (LIM15) from Lilium longiflorum (Trumpet lily).